Here is a 427-residue protein sequence, read N- to C-terminus: Tumor necrosis factor receptor superfamily member 16 (427 aa).

Residues 1-31 (MRRAGAACSAMDRLRLLLLLLLLLGVSFGGA) form the signal peptide. Over 32 to 254 (KETCSTGMYT…VVTRGTADNL (223 aa)) the chain is Extracellular. 4 TNFR-Cys repeats span residues 34–67 (TCST…QTVC), 69–110 (PCLD…DAVC), 111–149 (RCSY…NTVC), and 151–191 (ECPE…DAEC). 12 cysteine pairs are disulfide-bonded: C35/C46, C47/C60, C50/C67, C70/C86, C89/C102, C92/C110, C112/C125, C128/C141, C131/C149, C152/C167, C170/C183, and C173/C191. N-linked (GlcNAc...) asparagine glycosylation is present at N63. The segment at 197 to 223 (RWITRSTPPEGSDVTTPSTQEPEAPPE) is disordered. Polar residues predominate over residues 200–217 (TRSTPPEGSDVTTPSTQE). The helical transmembrane segment at 255 to 275 (IPVYCSILAAVVVGLVAYIAF) threads the bilayer. The Cytoplasmic segment spans residues 276–427 (KRWNSCKQNK…CSESTATSPV (152 aa)). 2 stretches are compositionally biased toward polar residues: residues 284–294 (NKQGANSRPVN) and 308–329 (SGIS…TASG). A disordered region spans residues 284–334 (NKQGANSRPVNQTPPPEGEKLHSDSGISVDSQSLHDQQTHTQTASGQALKG). A Phosphoserine modification is found at S314. The segment at 329–344 (GQALKGDGNLYSSLPL) is mediates interaction with KIDINS220. The 66-residue stretch at 356–421 (GDTWRHLAGE…DIVESLCSES (66 aa)) folds into the Death domain.

In terms of assembly, homodimer; disulfide-linked. Heterodimer with SORCS2. The extracellular domains of the heterodimer bind NGF. The cytoplasmic region of the heterodimer binds TRIO. NGF binding mediates dissociation of TRIO from the receptor complex. Interacts with TRAF2, TRAF4, TRAF6, PTPN13 and RANBP9. Interacts through TRAF6 with SQSTM1 which bridges NGFR to NTRK1. Interacts with BEX1. Interacts with BEX3. Interacts with KIDINS220 and NTRK1. Can form a ternary complex with NTRK1 and KIDINS220 and this complex is affected by the expression levels of KIDINS220. An increase in KIDINS220 expression leads to a decreased association of NGFR and NTRK1. Interacts (via death domain) with RAB31. Interacts with NTRK2; may regulate the ligand specificity of the NTRK2 receptor. Interacts with LINGO1. Interacts with NRADD. Interacts with MAGED1; the interaction antagonizes the association NGFR:NTRK1. Interacts with RTN4R. Interacts (via death domain) with ARHGDIA and RIPK2. Interacts with BFAR. As to quaternary structure, (Microbial infection) Binds to rabies virus glycoprotein Gs. Post-translationally, N-glycosylated. O-glycosylated. Phosphorylated on serine residues. As to expression, detected in Schwann cells. Detected in embryonic brain, in hippocampus neurons (at protein level). Detected in brain and spinal cord.

The protein resides in the cell membrane. It localises to the cytoplasm. It is found in the perikaryon. Its subcellular location is the cell projection. The protein localises to the growth cone. The protein resides in the dendritic spine. Functionally, low affinity neurotrophin receptor which can bind to mature NGF, BDNF, NTF3, and NTF4. Forms a heterodimeric receptor with SORCS2 that binds the precursor forms of NGF (proNGF), BDNF (proBDNF) and NTF3 (proNT3) with high affinity, and has much lower affinity for mature NGF and BDNF. Plays an important role in differentiation and survival of specific neuronal populations during development. Can mediate cell survival as well as cell death of neural cells. The heterodimeric receptor formed with SORCS2 plays a role in proBDNF-dependent synaptic plasticity, in hippocampal long term depression (LTD) and long term potentiation (LTP). Plays a role in the inactivation of RHOA. Plays a role in the regulation of the translocation of GLUT4 to the cell surface in adipocytes and skeletal muscle cells in response to insulin, probably by regulating RAB31 activity, and thereby contributes to the regulation of insulin-dependent glucose uptake. Necessary for the circadian oscillation of the clock genes BMAL1, PER1, PER2 and NR1D1 in the suprachiasmatic nucleus (SCN) of the brain and in liver and of the genes involved in glucose and lipid metabolism in the liver. Its function is as follows. (Microbial infection) Cell surface receptor for rabies virus glycoprotein Gs. Does not bind NGF, BDNF, NTF3, and NTF4. The chain is Tumor necrosis factor receptor superfamily member 16 (Ngfr) from Mus musculus (Mouse).